We begin with the raw amino-acid sequence, 399 residues long: Elongation factor Tu (399 aa).

Residues 10–209 (KPHVNIGTIG…AVDSYIPTPK (200 aa)) form the tr-type G domain. The G1 stretch occupies residues 19–26 (GHVDHGKT). 19–26 (GHVDHGKT) provides a ligand contact to GTP. Thr26 contacts Mg(2+). A G2 region spans residues 60–64 (GITIA). Positions 81 to 84 (DCPG) are G3. GTP-binding positions include 81 to 85 (DCPGH) and 136 to 139 (NKTD). The tract at residues 136–139 (NKTD) is G4. The interval 174–176 (SAL) is G5.

Belongs to the TRAFAC class translation factor GTPase superfamily. Classic translation factor GTPase family. EF-Tu/EF-1A subfamily. Monomer.

Its subcellular location is the cytoplasm. The enzyme catalyses GTP + H2O = GDP + phosphate + H(+). In terms of biological role, GTP hydrolase that promotes the GTP-dependent binding of aminoacyl-tRNA to the A-site of ribosomes during protein biosynthesis. The polypeptide is Elongation factor Tu (Campylobacter hominis (strain ATCC BAA-381 / DSM 21671 / CCUG 45161 / LMG 19568 / NCTC 13146 / CH001A)).